The sequence spans 1355 residues: MVCAMQEVAAVQHQQQQQQLQLPQQQQQQQQTTQQQHATTIVLLTGNGGGNLHIVATPQQHQPMHQLHHQHQHQHQHQQQAKSQQLKQQHSALVKLLESAPIKQQQQTPKQIVYLQQQQQQPQRKRLKNEAAIVQQQQQTPATLVKTTTTSNSNSNNTQTTNSISQQQQQHQIVLQHQQPAAAATPKPCADLSAKNDSESGIDEDSPNSDEDCPNANPAGTSLEDSSYEQYQCPWKKIRYARELKQRELEQQQTTGGSNAQQQVEAKPAAIPTSNIKQLHCDSPFSAQTHKEIANLLRQQSQQQQVVATQQQQQQQQQHQHQQQRRDSSDSNCSLMSNSSNSSAGNCCTCNAGDDQQLEEMDEAHDSGCDDELCEQHHQRLDSSQLNYLCQKFDEKLDTALSNSSANTGRNTPAVTANEDADGFFRRSIQQKIQYRPCTKNQQCSILRINRNRCQYCRLKKCIAVGMSRDAVRFGRVPKREKARILAAMQQSTQNRGQQRALATELDDQPRLLAAVLRAHLETCEFTKEKVSAMRQRARDCPSYSMPTLLACPLNPAPELQSEQEFSQRFAHVIRGVIDFAGMIPGFQLLTQDDKFTLLKAGLFDALFVRLICMFDSSINSIICLNGQVMRRDAIQNGANARFLVDSTFNFAERMNSMNLTDAEIGLFCAIVLITPDRPGLRNLELIEKMYSRLKGCLQYIVAQNRPDQPEFLAKLLETMPDLRTLSTLHTEKLVVFRTEHKELLRQQMWSMEDGNNSDGQQNKSPSGSWADAMDVEAAKSPLGSVSSTESADLDYGSPSSSQPQGVSLPSPPQQQPSALASSAPLLAATLSGGCPLRNRANSGSSGDSGAAEMDIVGSHAHLTQNGLTITPIVRHQQQQQQQQQIGILNNAHSRNLNGGHAMCQQQQQHPQLHHHLTAGAARYRKLDSPTDSGIESGNEKNECKAVSSGGSSSCSSPRSSVDDALDCSDAAANHNQVVQHPQLSVVSVSPVRSPQPSTSSHLKRQIVEDMPVLKRVLQAPPLYDTNSLMDEAYKPHKKFRALRHREFETAEADASSSTSGSNSLSAGSPRQSPVPNSVATPPPSAASAAAGNPAQSQLHMHLTRSSPKASMASSHSVLAKSLMAEPRMTPEQMKRSDIIQNYLKRENSTAASSTTNGVGNRSPSSSSTPPPSAVQNQQRWGSSSVITTTCQQRQQSVSPHSNGSSSSSSSSSSSSSSSSSTSSNCSSSSASSCQYFQSPHSTSNGTSAPASSSSGSNSATPLLELQVDIADSAQPLNLSKKSPTPPPSKLHALVAAANAVQRYPTLSADVTVTASNGGPPSAAASPAPSSSPPASVGSPNPGLSAAVHKVMLEA.

Disordered regions lie at residues 60 to 91, 126 to 228, 248 to 268, and 308 to 344; these read QHQP…QQHS, RLKN…DSSY, ELEQ…EAKP, and ATQQ…NSSA. Basic residues predominate over residues 66 to 76; it reads QLHHQHQHQHQ. Low complexity-rich tracts occupy residues 77–91 and 143–179; these read HQQQ…QQHS and TLVK…QHQQ. Residues 200 to 213 are compositionally biased toward acidic residues; sequence SGIDEDSPNSDEDC. Polar residues-rich tracts occupy residues 218–228 and 254–264; these read PAGTSLEDSSY and TTGGSNAQQQV. 2 stretches are compositionally biased toward low complexity: residues 308–321 and 330–344; these read ATQQ…QHQH and DSNC…NSSA. The nuclear receptor DNA-binding region spans 384–474; that stretch reads SQLNYLCQKF…VGMSRDAVRF (91 aa). The segment at 387 to 421 adopts an NR C4-type; degenerate zinc-finger fold; it reads NYLCQKFDEKLDTALSNSSANTGRNTPAVTANEDA. An NR C4-type zinc finger spans residues 438-457; sequence CTKNQQCSILRINRNRCQYC. The NR LBD domain maps to 508–756; the sequence is DQPRLLAAVL…QQMWSMEDGN (249 aa). Disordered regions lie at residues 780–821, 927–964, 987–1007, 1051–1117, 1147–1260, and 1312–1344; these read KSPL…SALA, LDSP…SVDD, VSVS…KRQI, AEAD…SSHS, ENST…SNSA, and TVTA…NPGL. Composition is skewed to low complexity over residues 797-809, 948-960, 987-1001, 1053-1098, and 1106-1117; these read GSPS…GVSL, SSGG…SPRS, VSVS…STSS, ADAS…AQSQ, and SSPKASMASSHS. 2 stretches are compositionally biased toward polar residues: residues 1149–1162 and 1174–1196; these read STAA…VGNR and AVQN…QRQQ. 3 stretches are compositionally biased toward low complexity: residues 1197–1233, 1242–1260, and 1315–1343; these read SVSP…SASS, STSN…SNSA, and ASNG…PNPG.

The protein belongs to the nuclear hormone receptor family. NR1 subfamily.

Its subcellular location is the nucleus. Implicated in the regulation of ecdysone-triggered gene hierarchies. Probably plays a key role in mediating the regulation of the larval molt by 20-OH-ecdysone. This chain is Ecdysone-induced protein 75B, isoform A (Eip75B), found in Drosophila melanogaster (Fruit fly).